We begin with the raw amino-acid sequence, 485 residues long: Peptidyl-prolyl cis-trans isomerase-like 4 (485 aa).

In terms of domain architecture, PPIase cyclophilin-type spans 1 to 172 (MSVLLETSAG…IDIRIKHTVI (172 aa)). The region spanning 251–329 (NVLFVCKLNP…RRIHVDFSQS (79 aa)) is the RRM domain. Positions 377–485 (NYRMVYGEEE…RDENDRRSRR (109 aa)) are disordered. The segment covering 426–485 (RPRDRSRDRYHKPRDDRRGDRRDRDRRDQDRNRYRDRDHRDRGREKDRYGRDENDRRSRR) has biased composition (basic and acidic residues).

This sequence belongs to the cyclophilin-type PPIase family. PPIL4 subfamily.

The protein localises to the nucleus. It carries out the reaction [protein]-peptidylproline (omega=180) = [protein]-peptidylproline (omega=0). Its function is as follows. PPIases accelerate the folding of proteins. It catalyzes the cis-trans isomerization of proline imidic peptide bonds in oligopeptides. This chain is Peptidyl-prolyl cis-trans isomerase-like 4 (CYP6), found in Gibberella zeae (strain ATCC MYA-4620 / CBS 123657 / FGSC 9075 / NRRL 31084 / PH-1) (Wheat head blight fungus).